A 1179-amino-acid chain; its full sequence is Probable manganese-transporting ATPase PDR2 (1179 aa).

The Cytoplasmic segment spans residues 1 to 20; the sequence is MSSFRVGGKVVEKVDLCRKK. A helical membrane pass occupies residues 21 to 42; that stretch reads QLVWRLDVWPFAILYTVWLTTI. Residues 43–50 lie on the Lumenal side of the membrane; it reads VPSIDFSD. The chain crosses the membrane as a helical span at residues 51–71; sequence ACIALGGLSAFHILVLLFTTW. At 72-192 the chain is on the cytoplasmic side; that stretch reads SVDFKCFVQF…FDYPQPTFQK (121 aa). The helical transmembrane segment at 193 to 215 threads the bilayer; the sequence is LMKENCMEPFFVFQVFCVGLWCL. The Lumenal segment spans residues 216-218; the sequence is DEF. Residues 219-238 traverse the membrane as a helical segment; sequence WYYSVFTLFMLFMFESTMAK. The Cytoplasmic segment spans residues 239–402; the sequence is SRLKTLTDLR…ERVTANSWES (164 aa). The helical transmembrane segment at 403-422 threads the bilayer; sequence GLFILFLVVFAVIAAGYVLV. The Lumenal portion of the chain corresponds to 423-435; it reads KGLEDPTRSKYKL. The chain crosses the membrane as a helical span at residues 436-453; the sequence is LLGCSLIITSVIPPELPM. At 454–947 the chain is on the cytoplasmic side; sequence ELSIAVNTSL…RQGRSTLVTT (494 aa). The active-site 4-aspartylphosphate intermediate is the D491. Residues D812 and D816 each coordinate Mg(2+). The tract at residues 833–880 is disordered; the sequence is KLPLSPSDSSKDDKSKSKKSKLPLEPASKTITQNGEGSSKGKIPPQNR. A helical transmembrane segment spans residues 948–967; that stretch reads LQMFKILGLNCLATAYVLSV. The Lumenal portion of the chain corresponds to 968–979; it reads MYLDGVKLGDVQ. A helical membrane pass occupies residues 980–997; the sequence is ATISGVLTAAFFLFISHA. Over 998-1013 the chain is Cytoplasmic; sequence RPLQTLSAERPHPSVF. A helical membrane pass occupies residues 1014 to 1034; sequence SVYLFLSLIGQFAVHLTFLVY. Residues 1035-1059 are Lumenal-facing; sequence SVKEAEKHMPEECIEPDASFHPNLV. The chain crosses the membrane as a helical span at residues 1060 to 1079; it reads NTVSYMVSMMLQVATFAVNY. Residues 1080-1092 are Cytoplasmic-facing; the sequence is MGHPFNQSIRENK. A helical transmembrane segment spans residues 1093-1110; it reads PFFYALIAGAGFFTVIAS. The Lumenal segment spans residues 1111–1128; that stretch reads DLFRDLNDSLKLVPLPQG. The chain crosses the membrane as a helical span at residues 1129–1148; the sequence is LRDKLLIWASLMFIICYSWE. At 1149 to 1179 the chain is on the cytoplasmic side; it reads RLLRWAFPGKISSWKHKQRAVTANLEKKKKV.

This sequence belongs to the cation transport ATPase (P-type) (TC 3.A.3) family. Type V subfamily. In terms of tissue distribution, highly expressed in root meristem. Expressed in pavement cells of trichomes, stipules, stamens and pollen grains.

Its subcellular location is the endoplasmic reticulum membrane. The catalysed reaction is ATP + H2O = ADP + phosphate + H(+). In terms of biological role, mediates manganese transport into the endoplasmic reticulum. The ATPase activity is required for cellular manganese homeostasis. Plays an important role in pollen and root development through its impact on protein secretion and transport processes. Functions together with LPR1 and LPR2 in a common pathway that adjusts root meristem activity to phosphate availability. Under phosphate limitation, restricts SHR movement in root meristem and is required for maintaining SCR expression in the root meristem stem-cell niche as well as for proximal meristem activity. Can complement the yeast spf1 mutant. This chain is Probable manganese-transporting ATPase PDR2 (PDR2), found in Arabidopsis thaliana (Mouse-ear cress).